The sequence spans 375 residues: MKKQRMLVLFTALLFVFTGCSHSPETKESPKEKAQTQKVSSASASEKKDLPNIRILATGGTIAGADQSKTSTTEYKAGVVGVESLIEAVPEMKDIANVSGEQIVNVGSTNIDNKILLKLAKRINHLLASDDVDGIVVTHGTDTLEETAYFLNLTVKSDKPVVIVGSMRPSTAISADGPSNLYNAVKVAGAPEAKGKGTLVVLNDRIASARYVTKTNTTTTDTFKSEEMGFVGTIADDIYFNNEITRKHTKDTDFSVSNLDELPQVDIIYGYQNDGSYLFDAAVKAGAKGIVFAGSGNGSLSDAAEKGADSAVKKGVTVVRSTRTGNGVVTPNQDYAEKDLLASNSLNPQKARMLLMLALTKTNDPQKIQAYFNEY.

The signal sequence occupies residues 1-19; that stretch reads MKKQRMLVLFTALLFVFTG. Residues 22-46 form a disordered region; sequence HSPETKESPKEKAQTQKVSSASASE. Basic and acidic residues predominate over residues 24 to 35; it reads PETKESPKEKAQ. The 325-residue stretch at 51-375 folds into the Asparaginase/glutaminase domain; it reads PNIRILATGG…QKIQAYFNEY (325 aa). The O-isoaspartyl threonine intermediate role is filled by threonine 61. Substrate is bound by residues serine 108 and 141–142; that span reads TD.

This sequence belongs to the asparaginase 1 family. In terms of assembly, homotetramer.

The enzyme catalyses L-asparagine + H2O = L-aspartate + NH4(+). Functionally, catalyzes the conversion of L-asparagine to L-aspartate and ammonium. In Bacillus subtilis (strain 168), this protein is L-asparaginase 2 (ansZ).